The primary structure comprises 98 residues: Defensin-like protein 192 (98 aa).

The N-terminal stretch at 1-27 (MATKSVSTFAIFFILVLAIFETPEIEA) is a signal peptide. Disulfide bonds link cysteine 32–cysteine 86, cysteine 45–cysteine 69, cysteine 54–cysteine 81, and cysteine 58–cysteine 83.

The protein belongs to the DEFL family. Protease inhibitor I18 (RTI/MTI-2) subfamily.

It is found in the secreted. This Arabidopsis thaliana (Mouse-ear cress) protein is Defensin-like protein 192 (ATTI7).